A 214-amino-acid chain; its full sequence is dITP/XTP pyrophosphatase (214 aa).

A substrate-binding site is contributed by 13–18; sequence SHNKGK. Mg(2+) contacts are provided by Glu-45 and Asp-74. Asp-74 serves as the catalytic Proton acceptor. Residues Ser-75, 163–166, Lys-186, and 199–200 each bind substrate; these read FGYD and HR.

This sequence belongs to the HAM1 NTPase family. In terms of assembly, homodimer. It depends on Mg(2+) as a cofactor.

The enzyme catalyses XTP + H2O = XMP + diphosphate + H(+). It carries out the reaction dITP + H2O = dIMP + diphosphate + H(+). It catalyses the reaction ITP + H2O = IMP + diphosphate + H(+). In terms of biological role, pyrophosphatase that catalyzes the hydrolysis of nucleoside triphosphates to their monophosphate derivatives, with a high preference for the non-canonical purine nucleotides XTP (xanthosine triphosphate), dITP (deoxyinosine triphosphate) and ITP. Seems to function as a house-cleaning enzyme that removes non-canonical purine nucleotides from the nucleotide pool, thus preventing their incorporation into DNA/RNA and avoiding chromosomal lesions. In Agrobacterium fabrum (strain C58 / ATCC 33970) (Agrobacterium tumefaciens (strain C58)), this protein is dITP/XTP pyrophosphatase.